The sequence spans 485 residues: Skb1 localization factor 1 (485 aa).

Positions 1–200 (MSSIIQNPIE…VDDSDLTPHT (200 aa)) are sufficient for interaction with Skb1. Disordered regions lie at residues 117-230 (NAAN…MSRN), 286-416 (ETQH…LRRS), and 446-466 (TTQE…KPEK). Polar residues predominate over residues 171 to 182 (SRSSRYSKTSDL). Over residues 189–198 (RFVDDSDLTP) the composition is skewed to basic and acidic residues. Polar residues-rich tracts occupy residues 218–230 (GRSS…MSRN) and 341–363 (VGSS…QQDS). Serine 222 carries the post-translational modification Phosphoserine. Over residues 371-393 (SERSYRRVRDQYLSKPRLSDKNR) the composition is skewed to basic and acidic residues. Polar residues predominate over residues 394–416 (YSTFSEFPGQGTPSASQSNLRRS). Residues 447 to 464 (TQERKPVVKPDSIKTVKP) show a composition bias toward basic and acidic residues. Residues 451–485 (KPVVKPDSIKTVKPEKKKSKGFFKKLMHKISHIFD) form a required and sufficient for plasma membrane anchoring; lysine-rich, may bind to anionic lipids in the plasma membrane region. Phosphoserine is present on serine 458.

In terms of assembly, interacts with Skb1.

The protein resides in the cell membrane. Functionally, acts as a membrane anchor for Skb1 in forming plasma membrane microdomains. Promotes mitotic entry by sequestering mitotic inhibitor Skb1 from its regulatory targets Cdr1 and Wee1. The chain is Skb1 localization factor 1 from Schizosaccharomyces pombe (strain 972 / ATCC 24843) (Fission yeast).